The chain runs to 315 residues: Small ribosomal subunit biogenesis GTPase RsgA (315 aa).

The 165-residue stretch at 79-243 (LSKESHILGA…LIDTPGIKGF (165 aa)) folds into the CP-type G domain. GTP is bound by residues 128–131 (NKID) and 182–190 (GHSGVGKSS). Zn(2+) contacts are provided by Cys-267, Cys-272, His-274, and Cys-280.

The protein belongs to the TRAFAC class YlqF/YawG GTPase family. RsgA subfamily. In terms of assembly, monomer. Associates with 30S ribosomal subunit, binds 16S rRNA. The cofactor is Zn(2+).

The protein resides in the cytoplasm. One of several proteins that assist in the late maturation steps of the functional core of the 30S ribosomal subunit. Helps release RbfA from mature subunits. May play a role in the assembly of ribosomal proteins into the subunit. Circularly permuted GTPase that catalyzes slow GTP hydrolysis, GTPase activity is stimulated by the 30S ribosomal subunit. This chain is Small ribosomal subunit biogenesis GTPase RsgA, found in Porphyromonas gingivalis (strain ATCC BAA-308 / W83).